The following is a 392-amino-acid chain: Succinyl-diaminopimelate desuccinylase (392 aa).

His-71 is a Zn(2+) binding site. Residue Asp-73 is part of the active site. Asp-102 serves as a coordination point for Zn(2+). Residue Glu-144 is the Proton acceptor of the active site. Zn(2+) contacts are provided by Glu-145, Glu-173, and His-362.

It belongs to the peptidase M20A family. DapE subfamily. In terms of assembly, homodimer. Zn(2+) serves as cofactor. It depends on Co(2+) as a cofactor.

The enzyme catalyses N-succinyl-(2S,6S)-2,6-diaminopimelate + H2O = (2S,6S)-2,6-diaminopimelate + succinate. Its pathway is amino-acid biosynthesis; L-lysine biosynthesis via DAP pathway; LL-2,6-diaminopimelate from (S)-tetrahydrodipicolinate (succinylase route): step 3/3. Functionally, catalyzes the hydrolysis of N-succinyl-L,L-diaminopimelic acid (SDAP), forming succinate and LL-2,6-diaminopimelate (DAP), an intermediate involved in the bacterial biosynthesis of lysine and meso-diaminopimelic acid, an essential component of bacterial cell walls. The protein is Succinyl-diaminopimelate desuccinylase of Rhodospirillum rubrum (strain ATCC 11170 / ATH 1.1.1 / DSM 467 / LMG 4362 / NCIMB 8255 / S1).